Consider the following 469-residue polypeptide: Pup--protein ligase (469 aa).

Residue Glu-9 coordinates Mg(2+). Arg-53 is an ATP binding site. Position 55 (Tyr-55) interacts with Mg(2+). Asp-57 serves as the catalytic Proton acceptor. Glu-63 lines the Mg(2+) pocket. The ATP site is built by Thr-66 and Trp-430.

It belongs to the Pup ligase/Pup deamidase family. Pup-conjugating enzyme subfamily.

It catalyses the reaction ATP + [prokaryotic ubiquitin-like protein]-L-glutamate + [protein]-L-lysine = ADP + phosphate + N(6)-([prokaryotic ubiquitin-like protein]-gamma-L-glutamyl)-[protein]-L-lysine.. It participates in protein degradation; proteasomal Pup-dependent pathway. The protein operates within protein modification; protein pupylation. Functionally, catalyzes the covalent attachment of the prokaryotic ubiquitin-like protein modifier Pup to the proteasomal substrate proteins, thereby targeting them for proteasomal degradation. This tagging system is termed pupylation. The ligation reaction involves the side-chain carboxylate of the C-terminal glutamate of Pup and the side-chain amino group of a substrate lysine. The protein is Pup--protein ligase of Kocuria rhizophila (strain ATCC 9341 / DSM 348 / NBRC 103217 / DC2201).